The following is a 591-amino-acid chain: Aspartate--tRNA(Asp/Asn) ligase (591 aa).

Glutamate 174 provides a ligand contact to L-aspartate. Positions 198–201 (QLFK) are aspartate. L-aspartate is bound at residue arginine 220. ATP is bound by residues 220–222 (RDE) and glutamine 229. Histidine 450 contributes to the L-aspartate binding site. ATP is bound at residue glutamate 483. Arginine 490 contacts L-aspartate. 535-538 (GLDR) contributes to the ATP binding site.

The protein belongs to the class-II aminoacyl-tRNA synthetase family. Type 1 subfamily. Homodimer.

The protein localises to the cytoplasm. The catalysed reaction is tRNA(Asx) + L-aspartate + ATP = L-aspartyl-tRNA(Asx) + AMP + diphosphate. Its function is as follows. Aspartyl-tRNA synthetase with relaxed tRNA specificity since it is able to aspartylate not only its cognate tRNA(Asp) but also tRNA(Asn). Reaction proceeds in two steps: L-aspartate is first activated by ATP to form Asp-AMP and then transferred to the acceptor end of tRNA(Asp/Asn). In Pseudomonas fluorescens (strain Pf0-1), this protein is Aspartate--tRNA(Asp/Asn) ligase.